The chain runs to 391 residues: Bifunctional enzyme IspD/IspF (391 aa).

The tract at residues 1–230 is 2-C-methyl-D-erythritol 4-phosphate cytidylyltransferase; sequence MLAAGRGKRA…KKKMQMFPDI (230 aa). A 2-C-methyl-D-erythritol 2,4-cyclodiphosphate synthase region spans residues 231–391; it reads RTGNGYDVHS…TVLYPGEIPK (161 aa). Residues aspartate 237 and histidine 239 each coordinate a divalent metal cation. 4-CDP-2-C-methyl-D-erythritol 2-phosphate is bound by residues 237-239 and 263-264; these read DVH and HS. Position 271 (histidine 271) interacts with a divalent metal cation. Residues 285–287, 361–364, phenylalanine 368, and arginine 371 each bind 4-CDP-2-C-methyl-D-erythritol 2-phosphate; these read DIG and TTNE.

In the N-terminal section; belongs to the IspD/TarI cytidylyltransferase family. IspD subfamily. This sequence in the C-terminal section; belongs to the IspF family. A divalent metal cation is required as a cofactor.

The catalysed reaction is 2-C-methyl-D-erythritol 4-phosphate + CTP + H(+) = 4-CDP-2-C-methyl-D-erythritol + diphosphate. The enzyme catalyses 4-CDP-2-C-methyl-D-erythritol 2-phosphate = 2-C-methyl-D-erythritol 2,4-cyclic diphosphate + CMP. It participates in isoprenoid biosynthesis; isopentenyl diphosphate biosynthesis via DXP pathway; isopentenyl diphosphate from 1-deoxy-D-xylulose 5-phosphate: step 2/6. Its pathway is isoprenoid biosynthesis; isopentenyl diphosphate biosynthesis via DXP pathway; isopentenyl diphosphate from 1-deoxy-D-xylulose 5-phosphate: step 4/6. Bifunctional enzyme that catalyzes the formation of 4-diphosphocytidyl-2-C-methyl-D-erythritol from CTP and 2-C-methyl-D-erythritol 4-phosphate (MEP) (IspD), and catalyzes the conversion of 4-diphosphocytidyl-2-C-methyl-D-erythritol 2-phosphate (CDP-ME2P) to 2-C-methyl-D-erythritol 2,4-cyclodiphosphate (ME-CPP) with a corresponding release of cytidine 5-monophosphate (CMP) (IspF). The polypeptide is Bifunctional enzyme IspD/IspF (Bartonella quintana (strain Toulouse) (Rochalimaea quintana)).